The sequence spans 560 residues: MKDKPAKGTPTLPATSMNVQNAILGLRGRDLISTLRNVSRQSLRHPLHTAHHLLALGGQLGRVILGDTPLQPNPRDPRFSDPTWSQNPFYRRGLQAYLAWQKQTRLWIEESHLDDDDRARAHFLFNLINDALAPSNSLLNPLAVKELFNSGGQSLVRGVAHLLDDLRHNDGLPRQVDERAFEVGGNLAATAGAVVFRNELLELIQYKPMSEKQHARPLLVVPPQINKFYIFDLSSTNSFVQYMLKNGLQVFMVSWRNPDPRHREWGLSSYVQALEEALNACRSISGNRDPNLMGACAGGLTMAALQGHLQAKHQLRRVRSATYLVSLLDSKFESPASLFADEQTIEAAKRRSYQRGVLDGAEVARIFAWMRPNDLIWNYWVNNYLLGKTPPAFDILYWNADSTRLPAALHGDLLDFFKLNPLTHPAGLEVCGTPIDLQKVELDSFTVAGSNDHITPWDAVYRSALLLGGDRRFVLANSGHIQSIINPPGNPKAYYLANPKLSSDPRAWLHDAKRSEGSWWPLWLEWITARSGPLKAPRSELGNATYPPLGPAPGTYVLTR.

Cys296 is a catalytic residue.

The protein belongs to the PHA/PHB synthase family. Type II PhaC subfamily.

It participates in biopolymer metabolism; poly-(R)-3-hydroxybutanoate biosynthesis. Synthesizes poly(3-hydroxyalkanoates) (PHA), complements a mutant of P.putida that does not make PHA. This Ectopseudomonas oleovorans (Pseudomonas oleovorans) protein is Poly(3-hydroxyalkanoate) polymerase 2.